The chain runs to 227 residues: Protein FAM3C (227 aa).

The first 30 residues, 1–30, serve as a signal peptide directing secretion; sequence MMRAGGLLKLGVLVSVLFVAVFLAFELLES. 2 disulfide bridges follow: cysteine 58–cysteine 86 and cysteine 64–cysteine 221. The 159-residue stretch at 67–225 folds into the GG-type lectin domain; that stretch reads DHFAFKITSG…LEMEGCIPIK (159 aa).

This sequence belongs to the FAM3 family.

Its subcellular location is the secreted. Involved in retinal laminar formation. The chain is Protein FAM3C (fam3c) from Danio rerio (Zebrafish).